The sequence spans 473 residues: MSFSRRQFIQVSGLAMCIGAAPLLVRASKNQQTALPVPPLLESRGGQPLFLTLQKAHWTFDGQYKTSVWGINGQYLGPTIRVHKNDDVKLIYSNRLAEPVSMTVSGLQLPGTLTGGVARQISPGSDWSPVLPIRQQAATCWYHANTPNRMAPHVYKGLAGMWLVEDETSRHLPLPKHYGVNDFPVILQDKRLDNFGVPEYQPASDSGFIGNTLLVNGVQNPFIEVSRGWIRLRLLNASNARRYQLQIGDGRPFYMIGTDLGLLPAPIAVQQLSLAPGERREVLIDMSKEDEVVVTAGESAGVLDKLRGLFEPSTVLISSTVLTIKATGLLSLVTDNLPSRLIDDVTPVSSVIRNREIYLDDNTPGINGALWDMNRVDITSQQGTWERWIVNASAPQPFHIEGVQFKLINHNGEAPQPQDYGWKDTVWVDGRVELLVYMNQPSYEHFPFLYYSQILEMADRGSVGQLVTIPVNQ.

Positions 1-27 (MSFSRRQFIQVSGLAMCIGAAPLLVRA) form a signal peptide, tat-type signal.

This sequence belongs to the FtsP family. Post-translationally, predicted to be exported by the Tat system. The position of the signal peptide cleavage has not been experimentally proven.

It is found in the periplasm. Its function is as follows. Cell division protein that is required for growth during stress conditions. May be involved in protecting or stabilizing the divisomal assembly under conditions of stress. The protein is Cell division protein FtsP of Photorhabdus laumondii subsp. laumondii (strain DSM 15139 / CIP 105565 / TT01) (Photorhabdus luminescens subsp. laumondii).